The following is a 413-amino-acid chain: Histidine--tRNA ligase (413 aa).

This sequence belongs to the class-II aminoacyl-tRNA synthetase family. As to quaternary structure, homodimer.

It localises to the cytoplasm. It catalyses the reaction tRNA(His) + L-histidine + ATP = L-histidyl-tRNA(His) + AMP + diphosphate + H(+). This chain is Histidine--tRNA ligase, found in Geobacter sulfurreducens (strain ATCC 51573 / DSM 12127 / PCA).